A 581-amino-acid polypeptide reads, in one-letter code: Sulfate adenylyltransferase (581 aa).

An N-terminal region spans residues 1 to 176 (MANAPHGGVL…VQAIQAPTHF (176 aa)). The catalytic stretch occupies residues 177 to 401 (DYVPLRYTPA…LRESYPPRPQ (225 aa)). A sulfate-binding site is contributed by Q204. ATP is bound by residues 204 to 207 (QTRN) and 298 to 301 (GRDH). Active-site residues include T205, R206, and N207. A sulfate-binding site is contributed by R206. A302 provides a ligand contact to sulfate. M340 is a binding site for ATP. Residues 402 to 581 (QGFTILLTGL…IMILESQNLV (180 aa)) form an allosteric regulation domain; adenylyl-sulfate kinase-like region. 3'-phosphoadenylyl sulfate is bound by residues 441–444 (EELR), 486–487 (TA), and R526.

This sequence in the N-terminal section; belongs to the sulfate adenylyltransferase family. The protein in the C-terminal section; belongs to the APS kinase family. As to quaternary structure, homohexamer. Dimer of trimers.

The protein localises to the cytoplasm. The enzyme catalyses sulfate + ATP + H(+) = adenosine 5'-phosphosulfate + diphosphate. It functions in the pathway sulfur metabolism; hydrogen sulfide biosynthesis; sulfite from sulfate: step 1/3. Its activity is regulated as follows. Allosterically inhibited by 3'-phosphoadenosine 5'-phosphosulfate (PAPS). Catalyzes the first intracellular reaction of sulfate assimilation, forming adenosine-5'-phosphosulfate (APS) from inorganic sulfate and ATP. Plays an important role in sulfate activation as a component of the biosynthesis pathway of sulfur-containing amino acids. This is Sulfate adenylyltransferase from Cryptococcus neoformans var. grubii serotype A (strain H99 / ATCC 208821 / CBS 10515 / FGSC 9487) (Filobasidiella neoformans var. grubii).